We begin with the raw amino-acid sequence, 529 residues long: DNA-binding protein (529 aa).

Residues 1–17 are compositionally biased toward basic and acidic residues; sequence MASREEEQRETTPERGR. 2 disordered regions span residues 1–107 and 125–166; these read MASR…IVDS and PVLI…AESE. Residues 129–139 are compositionally biased toward basic residues; the sequence is KHGKGGKRTVR. The segment covering 155-165 has biased composition (acidic residues); that stretch reads EEEEEPSEAES. Phosphotyrosine; by host is present on tyrosine 195. Positions 284 and 286 each coordinate Zn(2+). The interval 297-331 is flexible loop; that stretch reads IEMDVTSENGQRALKEQSSKAKIVKNRWGRNVVQI. The Zn(2+) site is built by cysteine 339, cysteine 355, cysteine 396, cysteine 398, cysteine 450, and cysteine 467. Residues 513–529 are C-terminal arm, DBP binding; sequence VSLPVAHSDARQNPFDF.

The protein belongs to the adenoviridae E2A DNA-binding protein family. In terms of assembly, homomultimerizes on viral ssDNA bound to pTP. Forms a initiation complex with viral polymerase, pTP and hosts NFIA and POU2F1/OCT1. Interacts with host SRCAP.

Its subcellular location is the host nucleus. Functionally, plays a role in the elongation phase of viral strand displacement replication by unwinding the template in an ATP-independent fashion, employing its capacity to form multimers. Also enhances the rate of initiation. Released from template upon second strand synthesis. Assembles in complex with viral pTP, viral pol, host NFIA and host POU2F1/OCT1 on viral origin of replication. Covers the whole ssDNA genome during synthesis. The complementary strand synthesis induces its relese from DNA template. May inhibit cellular transcription mediated by the interaction between host SRCAP and CBP. The protein is DNA-binding protein of Human adenovirus C serotype 5 (HAdV-5).